The sequence spans 239 residues: 4-hydroxy-tetrahydrodipicolinate reductase (239 aa).

Residues 8-13 (GSTGKM), 78-80 (GTT), and 102-105 (SANM) each bind NAD(+). Residue His134 is the Proton donor/acceptor of the active site. Residue His135 coordinates (S)-2,3,4,5-tetrahydrodipicolinate. Lys138 acts as the Proton donor in catalysis. 144-145 (GT) is a binding site for (S)-2,3,4,5-tetrahydrodipicolinate.

This sequence belongs to the DapB family.

Its subcellular location is the cytoplasm. It carries out the reaction (S)-2,3,4,5-tetrahydrodipicolinate + NAD(+) + H2O = (2S,4S)-4-hydroxy-2,3,4,5-tetrahydrodipicolinate + NADH + H(+). It catalyses the reaction (S)-2,3,4,5-tetrahydrodipicolinate + NADP(+) + H2O = (2S,4S)-4-hydroxy-2,3,4,5-tetrahydrodipicolinate + NADPH + H(+). The protein operates within amino-acid biosynthesis; L-lysine biosynthesis via DAP pathway; (S)-tetrahydrodipicolinate from L-aspartate: step 4/4. Its function is as follows. Catalyzes the conversion of 4-hydroxy-tetrahydrodipicolinate (HTPA) to tetrahydrodipicolinate. The protein is 4-hydroxy-tetrahydrodipicolinate reductase of Rickettsia conorii (strain ATCC VR-613 / Malish 7).